The following is a 364-amino-acid chain: Ribosomal RNA large subunit methyltransferase M (364 aa).

S-adenosyl-L-methionine is bound by residues Ser-187, 220–223, Asp-239, Asp-259, and Asp-276; that span reads CPGG. Residue Lys-305 is the Proton acceptor of the active site.

This sequence belongs to the class I-like SAM-binding methyltransferase superfamily. RNA methyltransferase RlmE family. RlmM subfamily. Monomer.

The protein resides in the cytoplasm. It catalyses the reaction cytidine(2498) in 23S rRNA + S-adenosyl-L-methionine = 2'-O-methylcytidine(2498) in 23S rRNA + S-adenosyl-L-homocysteine + H(+). In terms of biological role, catalyzes the 2'-O-methylation at nucleotide C2498 in 23S rRNA. The sequence is that of Ribosomal RNA large subunit methyltransferase M from Aeromonas hydrophila subsp. hydrophila (strain ATCC 7966 / DSM 30187 / BCRC 13018 / CCUG 14551 / JCM 1027 / KCTC 2358 / NCIMB 9240 / NCTC 8049).